Consider the following 391-residue polypeptide: 5-amino-6-(D-ribitylamino)uracil--L-tyrosine 4-hydroxyphenyl transferase (391 aa).

The region spanning 55-302 (VTYVINRNIN…GAVARIYLGN (248 aa)) is the Radical SAM core domain. Residues Cys-69, Cys-73, and Cys-76 each coordinate [4Fe-4S] cluster.

It belongs to the radical SAM superfamily. CofH family. In terms of assembly, consists of two subunits, CofG and CofH. Requires [4Fe-4S] cluster as cofactor.

It carries out the reaction 5-amino-6-(D-ribitylamino)uracil + L-tyrosine + S-adenosyl-L-methionine = 5-amino-5-(4-hydroxybenzyl)-6-(D-ribitylimino)-5,6-dihydrouracil + 2-iminoacetate + 5'-deoxyadenosine + L-methionine + H(+). It participates in cofactor biosynthesis; coenzyme F0 biosynthesis. Catalyzes the radical-mediated synthesis of 5-amino-5-(4-hydroxybenzyl)-6-(D-ribitylimino)-5,6-dihydrouracil from 5-amino-6-(D-ribitylamino)uracil and L-tyrosine. The polypeptide is 5-amino-6-(D-ribitylamino)uracil--L-tyrosine 4-hydroxyphenyl transferase (Nostoc sp. (strain PCC 7120 / SAG 25.82 / UTEX 2576)).